The following is a 352-amino-acid chain: Ion-translocating oxidoreductase complex subunit D (352 aa).

4 helical membrane-spanning segments follow: residues 20-40 (IMLL…WFFG), 42-62 (GTLF…AIVL), 69-91 (VASH…SIPP), and 123-143 (PAMI…TSWL). Threonine 187 is modified (FMN phosphoryl threonine). Helical transmembrane passes span 215 to 235 (LAGV…VFLL), 242 to 262 (WHIP…GWLF), 267 to 287 (LASP…FFIL), 301 to 321 (LIFG…GGYP), and 322 to 342 (DGVA…DYYT).

The protein belongs to the NqrB/RnfD family. The complex is composed of six subunits: RsxA, RsxB, RsxC, RsxD, RsxE and RsxG. It depends on FMN as a cofactor.

It is found in the cell inner membrane. Its function is as follows. Part of a membrane-bound complex that couples electron transfer with translocation of ions across the membrane. Required to maintain the reduced state of SoxR. In Salmonella dublin (strain CT_02021853), this protein is Ion-translocating oxidoreductase complex subunit D.